The primary structure comprises 346 residues: S-adenosylmethionine:tRNA ribosyltransferase-isomerase (346 aa).

This sequence belongs to the QueA family. As to quaternary structure, monomer.

Its subcellular location is the cytoplasm. The enzyme catalyses 7-aminomethyl-7-carbaguanosine(34) in tRNA + S-adenosyl-L-methionine = epoxyqueuosine(34) in tRNA + adenine + L-methionine + 2 H(+). Its pathway is tRNA modification; tRNA-queuosine biosynthesis. Transfers and isomerizes the ribose moiety from AdoMet to the 7-aminomethyl group of 7-deazaguanine (preQ1-tRNA) to give epoxyqueuosine (oQ-tRNA). The protein is S-adenosylmethionine:tRNA ribosyltransferase-isomerase of Nitrosomonas eutropha (strain DSM 101675 / C91 / Nm57).